The following is a 304-amino-acid chain: Oxygen-dependent coproporphyrinogen-III oxidase (304 aa).

S95 is a substrate binding site. 2 residues coordinate a divalent metal cation: H99 and H109. H109 serves as the catalytic Proton donor. 111–113 lines the substrate pocket; it reads NVR. A divalent metal cation contacts are provided by H148 and H178. The segment at 243–278 is important for dimerization; sequence YVEFNLVYDRGTLFGLQSGGRTESILMSLPPLVRWR. 261–263 lines the substrate pocket; the sequence is GGR.

It belongs to the aerobic coproporphyrinogen-III oxidase family. In terms of assembly, homodimer. A divalent metal cation is required as a cofactor.

It localises to the cytoplasm. The enzyme catalyses coproporphyrinogen III + O2 + 2 H(+) = protoporphyrinogen IX + 2 CO2 + 2 H2O. It functions in the pathway porphyrin-containing compound metabolism; protoporphyrin-IX biosynthesis; protoporphyrinogen-IX from coproporphyrinogen-III (O2 route): step 1/1. Its function is as follows. Involved in the heme biosynthesis. Catalyzes the aerobic oxidative decarboxylation of propionate groups of rings A and B of coproporphyrinogen-III to yield the vinyl groups in protoporphyrinogen-IX. This Thioalkalivibrio sulfidiphilus (strain HL-EbGR7) protein is Oxygen-dependent coproporphyrinogen-III oxidase.